The primary structure comprises 219 residues: Probable nicotinate-nucleotide adenylyltransferase (219 aa).

Belongs to the NadD family.

The enzyme catalyses nicotinate beta-D-ribonucleotide + ATP + H(+) = deamido-NAD(+) + diphosphate. Its pathway is cofactor biosynthesis; NAD(+) biosynthesis; deamido-NAD(+) from nicotinate D-ribonucleotide: step 1/1. Functionally, catalyzes the reversible adenylation of nicotinate mononucleotide (NaMN) to nicotinic acid adenine dinucleotide (NaAD). The sequence is that of Probable nicotinate-nucleotide adenylyltransferase from Erythrobacter litoralis (strain HTCC2594).